We begin with the raw amino-acid sequence, 146 residues long: Single-stranded DNA-binding protein, mitochondrial (146 aa).

The transit peptide at 1–22 (MQHTRRMLNPLLTGLRNLPARG) directs the protein to the mitochondrion. Residues 38–142 (VNTVTILGRV…IIADDVLFFR (105 aa)) form the SSB domain.

As to quaternary structure, homotetramer. In terms of tissue distribution, uniformly distributed in the early embryo. High levels detected in the anterior and posterior midgut primordia of stage 12 embryos. In larvae, high levels were detected in proliferating tissues including the CNS and digestive tract. In adults, highly expressed in the CNS, digestive tract and ovary.

The protein resides in the mitochondrion. Binds preferentially and cooperatively to pyrimidine rich single-stranded DNA (ss-DNA). Required to maintain the copy number of mitochondrial DNA (mtDNA) and plays crucial roles during mtDNA replication that stimulate activity of the gamma complex polymerase PolG1/tam at the replication fork. Promotes PolG1 activity largely by organizing the template DNA and eliminating secondary structures to favor ss-DNA conformations that facilitate PolG1 activity. The chain is Single-stranded DNA-binding protein, mitochondrial (mtSSB) from Drosophila melanogaster (Fruit fly).